Reading from the N-terminus, the 269-residue chain is 2-heptyl-3-hydroxy-4(1H)-quinolone dioxygenase (269 aa).

Substrate is bound at residue His97. His246 (proton donor/acceptor) is an active-site residue.

This sequence belongs to the AB hydrolase superfamily. In terms of assembly, monomer.

It carries out the reaction 2-heptyl-3-hydroxy-4(1H)-quinolone + O2 = N-octanoylanthranilate + CO + H(+). In terms of biological role, ring-cleaving dioxygenase involved in the degradation pathway of the Pseudomonas aeruginosa quorum sensing signal molecules HHQ (2-heptyl-4-quinolone) and PQS (2-heptyl-3-hydroxy-4(1H)-quinolone) to anthranilate. Catalyzes the cleavage of PQS to form N-octanoylanthranilate and carbon monoxide. Thus, leads to the inactivation of PQS that plays a central role in the regulation of virulence factor production by P.aeruginosa, thereby quenching the production of antimicrobials, which may contribute to the competitiveness of M.abscessus in presence of P.aeruginosa. In vitro, can also use other 2-alkyl-3-hydroxy-4(1H)-quinolone (AHQ) substrates with shorter alkyl substituents at C2, but with lower efficiency. The sequence is that of 2-heptyl-3-hydroxy-4(1H)-quinolone dioxygenase from Mycobacteroides abscessus (strain ATCC 19977 / DSM 44196 / CCUG 20993 / CIP 104536 / JCM 13569 / NCTC 13031 / TMC 1543 / L948) (Mycobacterium abscessus).